The sequence spans 227 residues: Phage shock protein A homolog (227 aa).

Residues 33–125 (LRNMNSDLAK…AQMRKMHDKL (93 aa)) adopt a coiled-coil conformation. The tract at residues 191 to 211 (SAPQDDMADLSAKYDTGGSSQ) is disordered.

Belongs to the PspA/Vipp/IM30 family.

In Bacillus subtilis (strain 168), this protein is Phage shock protein A homolog (ydjF).